The primary structure comprises 95 residues: MDSGFGSDFGGTGGGKLDPGAIMEQVKVQIAVANAQELLQRMTDKCFRKCIGKPGGSLDNSEQKCIAMCMDRYMDAWNTVSRAYNSRLQRERANM.

N-acetylmethionine is present on Met-1. Ser-7 carries the phosphoserine modification. A Twin CX3C motif motif is present at residues 46-69 (CFRKCIGKPGGSLDNSEQKCIAMC). Cystine bridges form between Cys-46–Cys-69 and Cys-50–Cys-65. Position 53 is an N6-succinyllysine (Lys-53).

This sequence belongs to the small Tim family. As to quaternary structure, heterohexamer; composed of 3 copies of TIMM8 (TIMM8A or TIMM8B) and 3 copies of TIMM13, named soluble 70 kDa complex. Associates with the TIM22 complex, whose core is composed of TIMM22. In terms of tissue distribution, present at high level in liver and brain, and at lower level in muscle and heart. In CNS sections, it is predominantly present in the soma and the dendritic portion of the Purkinje cells of the cerebellum, but not in the glial cells. Scattered expression also is also detected in the brain stem, olfactory bulb, substantia nigra, hippocampus and striatum (at protein level).

It localises to the mitochondrion inner membrane. In terms of biological role, mitochondrial intermembrane chaperone that participates in the import and insertion of some multi-pass transmembrane proteins into the mitochondrial inner membrane. Also required for the transfer of beta-barrel precursors from the TOM complex to the sorting and assembly machinery (SAM complex) of the outer membrane. Acts as a chaperone-like protein that protects the hydrophobic precursors from aggregation and guide them through the mitochondrial intermembrane space. The TIMM8-TIMM13 complex mediates the import of proteins such as TIMM23, SLC25A12/ARALAR1 and SLC25A13/ARALAR2, while the predominant TIMM9-TIMM10 70 kDa complex mediates the import of much more proteins. This is Mitochondrial import inner membrane translocase subunit Tim13 (Timm13) from Mus musculus (Mouse).